The sequence spans 288 residues: tRNA-cytidine(32) 2-sulfurtransferase (288 aa).

Positions 70–75 match the PP-loop motif motif; sequence SGGKDS. C145, C148, and C236 together coordinate [4Fe-4S] cluster.

The protein belongs to the TtcA family. Homodimer. The cofactor is Mg(2+). [4Fe-4S] cluster is required as a cofactor.

The protein resides in the cytoplasm. It carries out the reaction cytidine(32) in tRNA + S-sulfanyl-L-cysteinyl-[cysteine desulfurase] + AH2 + ATP = 2-thiocytidine(32) in tRNA + L-cysteinyl-[cysteine desulfurase] + A + AMP + diphosphate + H(+). Its pathway is tRNA modification. In terms of biological role, catalyzes the ATP-dependent 2-thiolation of cytidine in position 32 of tRNA, to form 2-thiocytidine (s(2)C32). The sulfur atoms are provided by the cysteine/cysteine desulfurase (IscS) system. This is tRNA-cytidine(32) 2-sulfurtransferase from Bartonella tribocorum (strain CIP 105476 / IBS 506).